The primary structure comprises 690 residues: Protein hook (690 aa).

The Calponin-homology (CH) domain maps to 6 to 122 (MEIYESLIRW…RLLQLILGCA (117 aa)). Coiled-coil stretches lie at residues 134–515 (QIME…HHAE) and 546–577 (ETTQHQLSNLHTKIANLEAALVVKDQELQAAD).

It belongs to the hook family. As to quaternary structure, homodimer. Interacts with microtubules via its N-terminus.

It localises to the cytoplasm. The protein localises to the cytoskeleton. The protein resides in the endosome. Involved in endocytic trafficking. Probably acts as a cytoskeletal linker protein that tethers endosome vesicles to the cytoskeleton. In Anopheles gambiae (African malaria mosquito), this protein is Protein hook.